Here is a 271-residue protein sequence, read N- to C-terminus: 3-methyl-2-oxobutanoate hydroxymethyltransferase (271 aa).

2 residues coordinate Mg(2+): Asp-53 and Asp-92. Residues 53 to 54, Asp-92, and Lys-120 contribute to the 3-methyl-2-oxobutanoate site; that span reads DS. Glu-122 provides a ligand contact to Mg(2+). Glu-189 (proton acceptor) is an active-site residue.

It belongs to the PanB family. In terms of assembly, homodecamer; pentamer of dimers. Requires Mg(2+) as cofactor.

It is found in the cytoplasm. The catalysed reaction is 3-methyl-2-oxobutanoate + (6R)-5,10-methylene-5,6,7,8-tetrahydrofolate + H2O = 2-dehydropantoate + (6S)-5,6,7,8-tetrahydrofolate. Its pathway is cofactor biosynthesis; (R)-pantothenate biosynthesis; (R)-pantoate from 3-methyl-2-oxobutanoate: step 1/2. Catalyzes the reversible reaction in which hydroxymethyl group from 5,10-methylenetetrahydrofolate is transferred onto alpha-ketoisovalerate to form ketopantoate. This is 3-methyl-2-oxobutanoate hydroxymethyltransferase from Burkholderia mallei (strain NCTC 10247).